The chain runs to 407 residues: Cysteine desulfurase (407 aa).

Lys-226 is subject to N6-(pyridoxal phosphate)lysine. Residue Cys-364 is the Cysteine persulfide intermediate of the active site.

It belongs to the class-V pyridoxal-phosphate-dependent aminotransferase family. Csd subfamily. As to quaternary structure, homodimer. Interacts with SufE and the SufBCD complex composed of SufB, SufC and SufD. The interaction with SufE is required to mediate the direct transfer of the sulfur atom from the S-sulfanylcysteine. The cofactor is pyridoxal 5'-phosphate.

It is found in the cytoplasm. The catalysed reaction is (sulfur carrier)-H + L-cysteine = (sulfur carrier)-SH + L-alanine. It carries out the reaction L-selenocysteine + AH2 = hydrogenselenide + L-alanine + A + H(+). It participates in cofactor biosynthesis; iron-sulfur cluster biosynthesis. Cysteine desulfurases mobilize the sulfur from L-cysteine to yield L-alanine, an essential step in sulfur metabolism for biosynthesis of a variety of sulfur-containing biomolecules. Component of the suf operon, which is activated and required under specific conditions such as oxidative stress and iron limitation. Acts as a potent selenocysteine lyase in vitro, that mobilizes selenium from L-selenocysteine. Selenocysteine lyase activity is however unsure in vivo. The polypeptide is Cysteine desulfurase (Pectobacterium carotovorum subsp. carotovorum (strain PC1)).